The primary structure comprises 527 residues: Peptide chain release factor 3 (527 aa).

Residues 9–277 form the tr-type G domain; it reads AKRRTFAIIS…AVVNWAPMPL (269 aa). GTP is bound by residues 18–25, 86–90, and 140–143; these read SHPDAGKT, DTPGH, and NKLD.

The protein belongs to the TRAFAC class translation factor GTPase superfamily. Classic translation factor GTPase family. PrfC subfamily.

It is found in the cytoplasm. Functionally, increases the formation of ribosomal termination complexes and stimulates activities of RF-1 and RF-2. It binds guanine nucleotides and has strong preference for UGA stop codons. It may interact directly with the ribosome. The stimulation of RF-1 and RF-2 is significantly reduced by GTP and GDP, but not by GMP. This is Peptide chain release factor 3 from Pseudomonas syringae pv. tomato (strain ATCC BAA-871 / DC3000).